The sequence spans 791 residues: Biofilm architecture maintenance protein MbaA (791 aa).

An N-terminal signal peptide occupies residues 1 to 23; it reads MKLNHRILLLIAPVILLSAAASS. At 24-259 the chain is on the periplasmic side; it reads YIIYTSQKNA…NAQLHSIQRE (236 aa). A helical membrane pass occupies residues 260–280; it reads LLLSFGVSALVTVLMLLLLLY. In terms of domain architecture, HAMP spans 281-333; that stretch reads RHVINPILHLDKQLEEVENNQRKNIEKLNTDDEIGRLSSRFYAMYSELHSTYQ. Topologically, residues 281 to 791 are cytoplasmic; that stretch reads RHVINPILHL…FTEPSQSECR (511 aa). A GGDEF domain is found at 368 to 509; that stretch reads QHIWVMYIDL…GKNQVAYYSQ (142 aa). Residues 518–769 form the EAL domain; the sequence is RNNIERALRL…EISPWLHASN (252 aa).

It localises to the cell inner membrane. In terms of biological role, plays an essential role in the maintenance and the formation of the three-dimensional structure of the biofilms at the later stages of their development. Absence of mbaA promotes the accumulation of larger amount of biomass on the surfaces at later stage of development, results in the overproduction of an extracellular polymeric substance that accumulates in the matrix of biofilms. This yields biofilms lacking the typical structure consisting of pillars of cells separated by fluid filled channels. The polypeptide is Biofilm architecture maintenance protein MbaA (mbaA) (Vibrio cholerae serotype O1 (strain ATCC 39315 / El Tor Inaba N16961)).